Here is a 319-residue protein sequence, read N- to C-terminus: Beta-ketoacyl-[acyl-carrier-protein] synthase III (319 aa).

Active-site residues include cysteine 113 and histidine 246. The interval 247–251 is ACP-binding; that stretch reads QANLR. Asparagine 276 is an active-site residue.

The protein belongs to the thiolase-like superfamily. FabH family. Homodimer.

The protein resides in the cytoplasm. It catalyses the reaction malonyl-[ACP] + acetyl-CoA + H(+) = 3-oxobutanoyl-[ACP] + CO2 + CoA. Its pathway is lipid metabolism; fatty acid biosynthesis. In terms of biological role, catalyzes the condensation reaction of fatty acid synthesis by the addition to an acyl acceptor of two carbons from malonyl-ACP. Catalyzes the first condensation reaction which initiates fatty acid synthesis and may therefore play a role in governing the total rate of fatty acid production. Possesses both acetoacetyl-ACP synthase and acetyl transacylase activities. Its substrate specificity determines the biosynthesis of branched-chain and/or straight-chain of fatty acids. This chain is Beta-ketoacyl-[acyl-carrier-protein] synthase III, found in Chromobacterium violaceum (strain ATCC 12472 / DSM 30191 / JCM 1249 / CCUG 213 / NBRC 12614 / NCIMB 9131 / NCTC 9757 / MK).